The following is a 159-amino-acid chain: Phosphopantetheine adenylyltransferase (159 aa).

It belongs to the eukaryotic CoaD family.

Its subcellular location is the cytoplasm. It carries out the reaction (R)-4'-phosphopantetheine + ATP + H(+) = 3'-dephospho-CoA + diphosphate. It participates in cofactor biosynthesis; coenzyme A biosynthesis. Its function is as follows. Reversibly transfers an adenylyl group from ATP to 4'-phosphopantetheine, yielding dephospho-CoA (dPCoA) and pyrophosphate. The polypeptide is Phosphopantetheine adenylyltransferase (Thermococcus gammatolerans (strain DSM 15229 / JCM 11827 / EJ3)).